A 381-amino-acid chain; its full sequence is Alcohol dehydrogenase class-3 (381 aa).

Cys-49 is a binding site for Zn(2+). NAD(+) is bound at residue His-50. An alcohol contacts are provided by Thr-51 and His-71. Residues His-71, Glu-72, Cys-101, Cys-104, Cys-107, Cys-115, and Cys-179 each coordinate Zn(2+). NAD(+) is bound by residues 204 to 209, Asp-228, Lys-233, Ile-274, 297 to 299, 322 to 324, and Arg-374; these read GLGTVG, VGV, and TAF.

This sequence belongs to the zinc-containing alcohol dehydrogenase family. Class-III subfamily. In terms of assembly, homodimer. Zn(2+) serves as cofactor. In terms of tissue distribution, expressed at low levels in the leaves.

The protein resides in the cytoplasm. It catalyses the reaction a primary alcohol + NAD(+) = an aldehyde + NADH + H(+). It carries out the reaction a secondary alcohol + NAD(+) = a ketone + NADH + H(+). The catalysed reaction is S-(hydroxymethyl)glutathione + NADP(+) = S-formylglutathione + NADPH + H(+). The enzyme catalyses S-(hydroxymethyl)glutathione + NAD(+) = S-formylglutathione + NADH + H(+). The chain is Alcohol dehydrogenase class-3 (FDH) from Zea mays (Maize).